A 58-amino-acid polypeptide reads, in one-letter code: MTEVRLNNQTLVRLEAPTPSWKWIKLSRTLKLKMLNLPGVKIFRGAPENEDQDRDNLM.

The polypeptide is Probable U-exon protein (Snake adenovirus serotype 1 (SnAdV-1)).